A 71-amino-acid chain; its full sequence is Biotinylated protein TB7.3 (71 aa).

A Biotinyl-binding domain is found at 2 to 71 (AEDVRAEIVA…QAGDLIAVIS (70 aa)). The residue at position 37 (Lys37) is an N6-biotinyllysine.

In Mycobacterium bovis (strain ATCC BAA-935 / AF2122/97), this protein is Biotinylated protein TB7.3.